We begin with the raw amino-acid sequence, 769 residues long: Zinc finger protein 585B (769 aa).

Residues 1 to 12 are compositionally biased toward polar residues; that stretch reads MPASWTSPQKSS. The interval 1–23 is disordered; sequence MPASWTSPQKSSALAPDDHGSSY. Residues 27–97 enclose the KRAB domain; the sequence is VSFRDVVINF…QGERPRHSCP (71 aa). C2H2-type zinc fingers lie at residues 158 to 180, 186 to 208, 214 to 236, 242 to 264, 270 to 292, 298 to 320, 354 to 376, 382 to 404, 410 to 432, 438 to 460, 466 to 488, 494 to 516, 522 to 544, 550 to 572, 578 to 600, 606 to 628, 634 to 656, 662 to 684, 690 to 712, 718 to 740, and 746 to 768; these read YVCIECGRAFVQKPEFITHQKAH, YKCNECGKSVFQVSSLFRHQRIH, YQCSECGKGFPYNSDLSIHEKIH, HECTDCGKAFTQRSTLKMHQKIH, YICIECGQAFIQKTQLIAHRRIH, YECNNCGKSFISKSQLEVHQRIH, SICTECGKAFTYRSELIIHQRIH, YACSDCGKAFTQKSTLTVHQRIH, YVCMKCGLAFIRKAHLVTHQIIH, YKCGHCGKLFTSKSQLHVHKRIH, YVCNKCGKAFTNRSDLITHQKTH, YICSKCGKAFTQRSDLITHQRIH, YECNTCGKAFTQKSNLNIHQKIH, YECHECGKAFNQKSILIVHQKIH, YVCTECGRAFIRKSNFITHQRIH, YECSDCGKSFTSKSQLLVHQPLH, YVCAECGKAFSGRSNLSKHQKTH, YICSECGKTFRQKSELITHHRIH, YECSDCGKSFTKKSQLQVHQRIH, YVCAECGKAFSNRSNLNKHQTTH, and YKCGICGKGFVQKSVFSVHQGSH.

This sequence belongs to the krueppel C2H2-type zinc-finger protein family.

The protein localises to the nucleus. May be involved in transcriptional regulation. This is Zinc finger protein 585B (ZNF585B) from Pongo abelii (Sumatran orangutan).